Here is a 1082-residue protein sequence, read N- to C-terminus: M cell-type agglutination protein mam3 (1082 aa).

An N-terminal signal peptide occupies residues 1 to 18; the sequence is MSIALAFFILVLLGFSWA. Residues Asn-28, Asn-56, and Asn-82 are each glycosylated (N-linked (GlcNAc...) asparagine). Residues 353–374 form a disordered region; the sequence is TSSSSTDQLTSASPISSSVISP. Asn-451, Asn-475, Asn-495, Asn-520, Asn-548, Asn-588, Asn-613, and Asn-638 each carry an N-linked (GlcNAc...) asparagine glycan. 11 tandem repeats follow at residues 646–681, 682–717, 718–753, 754–789, 790–825, 826–861, 862–897, 898–933, 934–969, 970–1005, and 1006–1041. An 11 X 36 AA approximate tandem repeats region spans residues 720 to 1043; the sequence is VTETVTSGSI…VLVDIPQQHA (324 aa).

Belongs to the mam3/map4 family.

The protein resides in the cell surface. M cell-type specific protein involved in agglutination during conjugation. The protein is M cell-type agglutination protein mam3 of Schizosaccharomyces pombe (strain 972 / ATCC 24843) (Fission yeast).